An 85-amino-acid chain; its full sequence is U4-theraphotoxin-Hhn1c (85 aa).

An N-terminal signal peptide occupies residues 1–22 (MKVTLIAILTCAAVLVLHTTAA). Residues 23–48 (EELEAESQLMEVGMPDTELAAVDEER) constitute a propeptide that is removed on maturation. 3 disulfide bridges follow: cysteine 52-cysteine 66, cysteine 56-cysteine 77, and cysteine 71-cysteine 82.

It belongs to the neurotoxin 12 (Hwtx-2) family. 02 (Hwtx-2) subfamily. As to expression, expressed by the venom gland.

The protein resides in the secreted. Functionally, postsynaptic neurotoxin. The protein is U4-theraphotoxin-Hhn1c of Cyriopagopus hainanus (Chinese bird spider).